A 959-amino-acid polypeptide reads, in one-letter code: ATP-dependent 6-phosphofructokinase subunit beta (959 aa).

The segment at 2-573 (TVTTPFVNGT…HLNNFMAINS (572 aa)) is N-terminal catalytic PFK domain 1. Residues 144 to 167 (KNAVSTKPTPPPAPEASAESGLSS) are disordered. At T152 the chain carries Phosphothreonine. The segment covering 158–167 (EASAESGLSS) has biased composition (low complexity). Phosphoserine occurs at positions 163 and 171. ATP-binding positions include G206, 270–271 (RC), and 300–303 (GDGS). D301 lines the Mg(2+) pocket. Beta-D-fructose 6-phosphate-binding positions include 346-348 (SID), R383, 390-392 (MGR), E447, R475, and 481-484 (HVQR). Catalysis depends on D348, which acts as the Proton acceptor. An interdomain linker region spans residues 574–587 (ADHNEPKLPKDKRL). A C-terminal regulatory PFK domain 2 region spans residues 588–959 (KIAIVNVGAP…DHLVGRKRVD (372 aa)). Beta-D-fructose 2,6-bisphosphate is bound by residues R658, 716-720 (TLSNN), R754, and 761-763 (QGG). S803 carries the post-translational modification Phosphoserine. Beta-D-fructose 2,6-bisphosphate contacts are provided by residues K847, 853–856 (HVQQ), and R935.

Belongs to the phosphofructokinase type A (PFKA) family. ATP-dependent PFK group I subfamily. Eukaryotic two domain clade 'E' sub-subfamily. Heterooctamer of 4 alpha and 4 beta chains. Mg(2+) serves as cofactor.

The protein resides in the cytoplasm. The protein localises to the mitochondrion outer membrane. It carries out the reaction beta-D-fructose 6-phosphate + ATP = beta-D-fructose 1,6-bisphosphate + ADP + H(+). The protein operates within carbohydrate degradation; glycolysis; D-glyceraldehyde 3-phosphate and glycerone phosphate from D-glucose: step 3/4. Allosterically activated by ADP, AMP, or fructose 2,6-bisphosphate, and allosterically inhibited by ATP or citrate. Catalyzes the phosphorylation of D-fructose 6-phosphate to fructose 1,6-bisphosphate by ATP, the first committing step of glycolysis. The sequence is that of ATP-dependent 6-phosphofructokinase subunit beta (PFK2) from Saccharomyces cerevisiae (strain ATCC 204508 / S288c) (Baker's yeast).